The primary structure comprises 141 residues: Hemoglobin subunit alpha (141 aa).

Residues 1–141 (VLSPADKTNV…VSTVLTSKYR (141 aa)) form the Globin domain. Residue Ser3 is modified to Phosphoserine. Lys7 is modified (N6-succinyllysine). Residue Thr8 is modified to Phosphothreonine. Lys11 carries the N6-succinyllysine modification. At Lys16 the chain carries N6-acetyllysine; alternate. An N6-succinyllysine; alternate modification is found at Lys16. Tyr24 is modified (phosphotyrosine). Ser35 carries the post-translational modification Phosphoserine. N6-succinyllysine is present on Lys40. The residue at position 49 (Ser49) is a Phosphoserine. O2 is bound at residue His58. His87 lines the heme b pocket. Residue Ser102 is modified to Phosphoserine. Residue Thr108 is modified to Phosphothreonine. A Phosphoserine modification is found at Ser124. 2 positions are modified to phosphothreonine: Thr134 and Thr137. Ser138 is modified (phosphoserine).

The protein belongs to the globin family. As to quaternary structure, heterotetramer of two alpha chains and two beta chains. In terms of tissue distribution, red blood cells.

In terms of biological role, involved in oxygen transport from the lung to the various peripheral tissues. Its function is as follows. Hemopressin acts as an antagonist peptide of the cannabinoid receptor CNR1. Hemopressin-binding efficiently blocks cannabinoid receptor CNR1 and subsequent signaling. In Pteronura brasiliensis (Giant otter), this protein is Hemoglobin subunit alpha (HBA).